The following is an 862-amino-acid chain: Autotaxin (862 aa).

The first 27 residues, methionine 1–glycine 27, serve as a signal peptide directing secretion. Positions phenylalanine 28–arginine 35 are cleaved as a propeptide — removed by furin. N-linked (GlcNAc...) asparagine glycosylation occurs at asparagine 53. 2 consecutive SMB domains span residues threonine 54–alanine 97 and arginine 98–histidine 142. Cystine bridges form between cysteine 58/cysteine 75, cysteine 62/cysteine 93, cysteine 73/cysteine 86, cysteine 79/cysteine 85, cysteine 102/cysteine 119, cysteine 107/cysteine 137, cysteine 117/cysteine 130, cysteine 123/cysteine 129, cysteine 148/cysteine 194, and cysteine 156/cysteine 350. Positions arginine 126–aspartate 128 match the Cell attachment site motif. The tract at residues valine 144 to proline 501 is phosphodiesterase domain. 2 residues coordinate Zn(2+): aspartate 171 and threonine 209. Residue threonine 209 is the Nucleophile of the active site. Threonine 209, asparagine 230, and aspartate 311 together coordinate 1-(9Z-octadecenoyl)-sn-glycero-3-phosphate. Positions 209, 230, and 311 each coordinate 1-hexadecanoyl-sn-glycero-3-phosphate. The 1-tetradecanoyl-sn-glycerol 3-phosphate site is built by threonine 209, asparagine 230, and aspartate 311. Aspartate 311, histidine 315, aspartate 358, and histidine 359 together coordinate Zn(2+). Disulfide bonds link cysteine 366/cysteine 468, cysteine 413/cysteine 805, cysteine 566/cysteine 666, cysteine 568/cysteine 651, and cysteine 774/cysteine 784. N-linked (GlcNAc...) asparagine glycosylation is present at asparagine 410. Histidine 474 lines the Zn(2+) pocket. 1-(9Z-octadecenoyl)-sn-glycero-3-phosphate is bound at residue histidine 474. 1-hexadecanoyl-sn-glycero-3-phosphate is bound at residue histidine 474. A 1-tetradecanoyl-sn-glycerol 3-phosphate-binding site is contributed by histidine 474. N-linked (GlcNAc...) asparagine glycosylation occurs at asparagine 524. The interval leucine 597 to isoleucine 862 is nuclease-like domain. Residues aspartate 739, asparagine 741, asparagine 743, leucine 745, and aspartate 747 each contribute to the Ca(2+) site. An N-linked (GlcNAc...) asparagine glycan is attached at asparagine 806. A required for secretion region spans residues isoleucine 829–threonine 850.

It belongs to the nucleotide pyrophosphatase/phosphodiesterase family. It depends on Zn(2+) as a cofactor. The cofactor is Ca(2+). Post-translationally, N-glycosylation, but not furin-cleavage, plays a critical role on secretion and on lysoPLD activity. Secretion requires simultaneous glycosylation on Asn-53 and Asn-410, while probable glycosylation of Asn-410 has a preferential role on lysoPLD activity. Not O-glycosylated. In terms of processing, the interdomain disulfide bond between Cys-413 and Cys-805 is essential for catalytic activity. As to expression, expressed in brain and adipose tissue.

It is found in the secreted. The enzyme catalyses a 1-O-alkyl-sn-glycero-3-phosphoethanolamine + H2O = a 1-O-alkyl-sn-glycero-3-phosphate + ethanolamine + H(+). It carries out the reaction a 1-acyl-sn-glycero-3-phosphoethanolamine + H2O = a 1-acyl-sn-glycero-3-phosphate + ethanolamine + H(+). It catalyses the reaction 1-(9Z-octadecenoyl)-sn-glycero-3-phosphoethanolamine + H2O = 1-(9Z-octadecenoyl)-sn-glycero-3-phosphate + ethanolamine + H(+). The catalysed reaction is a 1-O-alkyl-sn-glycero-3-phosphocholine + H2O = a 1-O-alkyl-sn-glycero-3-phosphate + choline + H(+). The enzyme catalyses 1-O-(9Z-octadecenyl)-sn-glycero-3-phosphocholine + H2O = 1-O-(9Z-octadecenyl)-sn-glycero-3-phosphate + choline + H(+). It carries out the reaction 1-O-hexadecyl-sn-glycero-3-phosphocholine + H2O = 1-O-hexadecyl-sn-glycero-3-phosphate + choline + H(+). It catalyses the reaction a 1-O-(1Z-alkenyl)-sn-glycero-3-phosphocholine + H2O = a 1-O-(1Z-alkenyl)-sn-glycero-3-phosphate + choline + H(+). The catalysed reaction is a 1-acyl-sn-glycero-3-phosphocholine + H2O = a 1-acyl-sn-glycero-3-phosphate + choline + H(+). The enzyme catalyses 1-dodecanoyl-sn-glycero-3-phosphocholine + H2O = 1-dodecanoyl-sn-glycerol 3-phosphate + choline + H(+). It carries out the reaction 1-(9Z-octadecenoyl)-sn-glycero-3-phosphocholine + H2O = 1-(9Z-octadecenoyl)-sn-glycero-3-phosphate + choline + H(+). It catalyses the reaction 1-tetradecanoyl-sn-glycero-3-phosphocholine + H2O = 1-tetradecanoyl-sn-glycerol 3-phosphate + choline + H(+). The catalysed reaction is 1-decanoyl-sn-glycero-3-phosphocholine + H2O = 1-decanoyl-sn-glycero-3-phosphate + choline + H(+). The enzyme catalyses 1-octadecanoyl-sn-glycero-3-phosphocholine + H2O = 1-octadecanoyl-sn-glycero-3-phosphate + choline + H(+). It carries out the reaction 1-hexadecanoyl-sn-glycero-3-phosphocholine + H2O = 1-hexadecanoyl-sn-glycero-3-phosphate + choline + H(+). It catalyses the reaction 1-hexanoyl-sn-glycero-3-phosphocholine + H2O = 1-hexanoyl-sn-glycero-3-phosphate + choline + H(+). The catalysed reaction is 1-(9Z,12Z)-octadecadienoyl-sn-glycero-3-phosphocholine + H2O = 1-(9Z,12Z)-octadecadienoyl-sn-glycero-3-phosphate + choline + H(+). The enzyme catalyses sphing-4-enine-phosphocholine + H2O = sphing-4-enine 1-phosphate + choline + H(+). It carries out the reaction 1-(5Z,8Z,11Z,14Z-eicosatetraenoyl)-sn-glycero-3-phosphocholine + H2O = 1-(5Z,8Z,11Z,14Z-eicosatetraenoyl)-sn-glycero-3-phosphate + choline + H(+). It catalyses the reaction a 2-acyl-sn-glycero-3-phosphocholine + H2O = a 2-acyl-sn-glycerol 3-phosphate + choline + H(+). The catalysed reaction is a 1,2-diacyl-sn-glycero-3-phosphocholine + H2O = a 1,2-diacyl-sn-glycero-3-phosphate + choline + H(+). The enzyme catalyses 1,2-dioctanoyl-sn-glycero-3-phosphocholine + H2O = 1,2-dioctanoyl-sn-glycero-3-phosphate + choline + H(+). It carries out the reaction 1,2-didecanoyl-sn-glycero-3-phosphocholine + H2O = 1,2-didecanoyl-sn-glycero-3-phosphate + choline + H(+). It catalyses the reaction a 1-acyl-sn-glycero-3-phospho-L-serine + H2O = a 1-acyl-sn-glycero-3-phosphate + L-serine + H(+). The catalysed reaction is 1-(9Z-octadecenoyl)-sn-glycero-3-phospho-L-serine + H2O = 1-(9Z-octadecenoyl)-sn-glycero-3-phosphate + L-serine + H(+). The enzyme catalyses a 2-acyl-sn-glycero-3-phospho-L-serine + H2O = a 2-acyl-sn-glycerol 3-phosphate + L-serine + H(+). With respect to regulation, inhibited by EDTA and EGTA. Secreted lysophospholipase D that hydrolyzes lysophospholipids to produce the signaling molecule lysophosphatidic acid (LPA) in extracellular fluids. Its major substrate is lysophosphatidylcholine. Can also act on sphingosylphosphorylcholine producing sphingosine-1-phosphate, a modulator of cell motility. Can hydrolyze, in vitro, bis-pNPP, to some extent pNP-TMP, and barely ATP. Involved in several motility-related processes such as angiogenesis and neurite outgrowth. Acts as an angiogenic factor by stimulating migration of smooth muscle cells and microtubule formation. Stimulates migration of melanoma cells, probably via a pertussis toxin-sensitive G protein. May have a role in induction of parturition. Possible involvement in cell proliferation and adipose tissue development. Required for LPA production in activated platelets, cleaves the sn-1 lysophospholipids to generate sn-1 lysophosphatidic acids containing predominantly 18:2 and 20:4 fatty acids. Shows a preference for the sn-1 to the sn-2 isomer of 1-O-alkyl-sn-glycero-3-phosphocholine (lyso-PAF). The polypeptide is Autotaxin (Mus musculus (Mouse)).